The sequence spans 155 residues: Small ribosomal subunit protein uS7cz/uS7cy (155 aa).

It belongs to the universal ribosomal protein uS7 family. In terms of assembly, part of the 30S ribosomal subunit.

The protein resides in the plastid. It localises to the chloroplast. In terms of biological role, one of the primary rRNA binding proteins, it binds directly to 16S rRNA where it nucleates assembly of the head domain of the 30S subunit. The sequence is that of Small ribosomal subunit protein uS7cz/uS7cy (rps7-A) from Lotus japonicus (Lotus corniculatus var. japonicus).